The sequence spans 402 residues: Acetate kinase (402 aa).

Asparagine 7 is a binding site for Mg(2+). Lysine 14 is a binding site for ATP. Residue arginine 95 coordinates substrate. The active-site Proton donor/acceptor is aspartate 152. ATP is bound by residues 212 to 216 (HLGNG), 286 to 288 (DMR), and 334 to 338 (GIGEN). Glutamate 388 contributes to the Mg(2+) binding site.

Belongs to the acetokinase family. In terms of assembly, homodimer. Mg(2+) serves as cofactor. Requires Mn(2+) as cofactor.

The protein localises to the cytoplasm. The catalysed reaction is acetate + ATP = acetyl phosphate + ADP. It participates in metabolic intermediate biosynthesis; acetyl-CoA biosynthesis; acetyl-CoA from acetate: step 1/2. Catalyzes the formation of acetyl phosphate from acetate and ATP. Can also catalyze the reverse reaction. This chain is Acetate kinase, found in Nitratidesulfovibrio vulgaris (strain ATCC 29579 / DSM 644 / CCUG 34227 / NCIMB 8303 / VKM B-1760 / Hildenborough) (Desulfovibrio vulgaris).